Here is a 406-residue protein sequence, read N- to C-terminus: CinA-like protein (406 aa).

Belongs to the CinA family.

This Thermomicrobium roseum (strain ATCC 27502 / DSM 5159 / P-2) protein is CinA-like protein.